We begin with the raw amino-acid sequence, 234 residues long: 2-C-methyl-D-erythritol 4-phosphate cytidylyltransferase (234 aa).

Belongs to the IspD/TarI cytidylyltransferase family. IspD subfamily.

The catalysed reaction is 2-C-methyl-D-erythritol 4-phosphate + CTP + H(+) = 4-CDP-2-C-methyl-D-erythritol + diphosphate. It functions in the pathway isoprenoid biosynthesis; isopentenyl diphosphate biosynthesis via DXP pathway; isopentenyl diphosphate from 1-deoxy-D-xylulose 5-phosphate: step 2/6. Functionally, catalyzes the formation of 4-diphosphocytidyl-2-C-methyl-D-erythritol from CTP and 2-C-methyl-D-erythritol 4-phosphate (MEP). This is 2-C-methyl-D-erythritol 4-phosphate cytidylyltransferase from Pseudomonas aeruginosa (strain UCBPP-PA14).